The sequence spans 123 residues: uncharacterized protein (123 aa).

Residues 34 to 53 (LPFFFLFLGNLGKFFFLWPL) form a helical membrane-spanning segment.

It localises to the membrane. This is an uncharacterized protein from Saccharomyces cerevisiae (strain ATCC 204508 / S288c) (Baker's yeast).